The chain runs to 85 residues: Follicular dendritic cell secreted peptide (85 aa).

An N-terminal signal peptide occupies residues Met-1–Gly-17. The O-glycosylated at one site stretch occupies residues Ser-75–Ser-83.

Post-translationally, O-glycosylated with core 1 or possibly core 8 glycans. As to expression, abundantly expressed in tonsil, lymph node, and trachea; strong expression in prostate; lower expression in thyroid, stomach, and colon.

It localises to the secreted. Can bind to the surface of B-lymphoma cells, but not T-lymphoma cells, consistent with a function as a secreted mediator acting upon B-cells. The polypeptide is Follicular dendritic cell secreted peptide (FDCSP) (Homo sapiens (Human)).